Consider the following 160-residue polypeptide: Protein cornichon homolog 3 (160 aa).

The Cytoplasmic segment spans residues 1 to 10; the sequence is MAFTFAAFCY. A helical membrane pass occupies residues 11 to 31; the sequence is MLSLVLCAALIFFAIWHIIAF. Topologically, residues 32–72 are lumenal; that stretch reads DELRTDFKSPIDQCNPVHARERLRNIERICFLLRKLVLPEY. The helical transmembrane segment at 73–93 threads the bilayer; that stretch reads SIHSLFCVMFLCAQEWLTLGL. Topologically, residues 94–138 are cytoplasmic; that stretch reads NVPLLFYHFWRYFHCPADSSELAYDPPVVMNADTLSYCQKEAWCK. The helical transmembrane segment at 139–159 threads the bilayer; that stretch reads LAFYLLSFFYYLYCMIYTLVS. A topological domain (lumenal) is located at residue serine 160.

This sequence belongs to the cornichon family. In terms of assembly, acts as an auxiliary subunit for AMPA-selective glutamate receptors (AMPARs). Found in a complex with GRIA1, GRIA2, GRIA3, GRIA4, CNIH2, CACNG2, CACNG3, CACNG4, CACNG5, CACNG7 and CACNG8. In terms of tissue distribution, brain. Expressed in the neocortex, hippocampal formation, and cerebellum (at protein level).

The protein resides in the postsynaptic cell membrane. Functionally, regulates the trafficking and gating properties of AMPA-selective glutamate receptors (AMPARs). Promotes their targeting to the cell membrane and synapses and modulates their gating properties by regulating their rates of activation, deactivation and desensitization. The sequence is that of Protein cornichon homolog 3 (Cnih3) from Rattus norvegicus (Rat).